We begin with the raw amino-acid sequence, 436 residues long: UDP-glucuronate 4-epimerase 5 (436 aa).

The next 2 helical transmembrane spans lie at 36 to 56 and 95 to 115; these read LTLW…LSPP and GLTV…SIAL. NAD(+) is bound at residue 97-128; it reads TVLVTGASGFVGTHVSIALRRRGDGVLGLDNF. Catalysis depends on tyrosine 247, which acts as the Proton acceptor.

Belongs to the NAD(P)-dependent epimerase/dehydratase family. As to quaternary structure, homodimer. As to expression, in leaves, pollen and siliques, but not in roots or flowers.

The protein localises to the golgi apparatus. The protein resides in the golgi stack membrane. The enzyme catalyses UDP-alpha-D-glucuronate = UDP-alpha-D-galacturonate. In terms of biological role, involved in the synthesis of the negatively charged monosaccharide that forms the backbone of pectic cell wall components. The polypeptide is UDP-glucuronate 4-epimerase 5 (GAE5) (Arabidopsis thaliana (Mouse-ear cress)).